The sequence spans 329 residues: Sulfate/thiosulfate import ATP-binding protein CysA (329 aa).

One can recognise an ABC transporter domain in the interval 3–237; the sequence is IEIRNVSKNF…PASDFVYHFL (235 aa). 35–42 serves as a coordination point for ATP; that stretch reads GPSGCGKT.

Belongs to the ABC transporter superfamily. Sulfate/tungstate importer (TC 3.A.1.6) family. As to quaternary structure, the complex is composed of two ATP-binding proteins (CysA), two transmembrane proteins (CysT and CysW) and a solute-binding protein (CysP).

The protein resides in the cell inner membrane. The catalysed reaction is sulfate(out) + ATP + H2O = sulfate(in) + ADP + phosphate + H(+). The enzyme catalyses thiosulfate(out) + ATP + H2O = thiosulfate(in) + ADP + phosphate + H(+). Functionally, part of the ABC transporter complex CysAWTP involved in sulfate/thiosulfate import. Responsible for energy coupling to the transport system. In Pseudomonas aeruginosa (strain ATCC 15692 / DSM 22644 / CIP 104116 / JCM 14847 / LMG 12228 / 1C / PRS 101 / PAO1), this protein is Sulfate/thiosulfate import ATP-binding protein CysA.